Consider the following 303-residue polypeptide: MEHIFLELRSPGPDLFQLGPFSLRWYGLLIAISVLVGLNLSSELASKKGLKKSLINDLLPILVLASVIGARIYYVAFEWRNYTGKNFWSSINFLNLNIPLPSALEIWGGGIAIHGALIMGTLSIIFFCRWRKEPFWDVIDVLVPSVALGQAIGRWGNFFNNEAFGIPTNLPWKLFIPYRFRPEIFSTQDYFHPTFLYESVWNIFVFGILIFLFRKSNKKELKLPPGSLSCLYLITYSLGRFWIEGLRTDPLCLGGVPPFCEGGLRIAQLISLFLISAGLLGIWRIYVSKKALPDPSSINGRNQ.

The next 4 helical transmembrane spans lie at 18–38 (LGPF…LVGL), 58–78 (LLPI…VAFE), 106–126 (IWGG…SIIF), and 133–153 (EPFW…QAIG). A 1,2-diacyl-sn-glycero-3-phospho-(1'-sn-glycerol) is bound at residue Arg154. Transmembrane regions (helical) follow at residues 193–213 (PTFL…IFLF), 223–243 (LPPG…RFWI), and 266–286 (IAQL…WRIY).

Belongs to the Lgt family.

The protein localises to the cell inner membrane. It catalyses the reaction L-cysteinyl-[prolipoprotein] + a 1,2-diacyl-sn-glycero-3-phospho-(1'-sn-glycerol) = an S-1,2-diacyl-sn-glyceryl-L-cysteinyl-[prolipoprotein] + sn-glycerol 1-phosphate + H(+). It functions in the pathway protein modification; lipoprotein biosynthesis (diacylglyceryl transfer). In terms of biological role, catalyzes the transfer of the diacylglyceryl group from phosphatidylglycerol to the sulfhydryl group of the N-terminal cysteine of a prolipoprotein, the first step in the formation of mature lipoproteins. The protein is Phosphatidylglycerol--prolipoprotein diacylglyceryl transferase of Prochlorococcus marinus (strain NATL1A).